Here is a 107-residue protein sequence, read N- to C-terminus: Toxin MT2730 (107 aa).

The segment at 1 to 42 (MTHKRTKRQPAIAAGLNAPRRNRVGRQHGWPADVPSAEQRRA) is disordered.

Its function is as follows. Toxic component of a type II toxin-antitoxin (TA) system. Its toxic effect is neutralized by coexpression with cognate antitoxin MT2731. In Mycobacterium tuberculosis (strain CDC 1551 / Oshkosh), this protein is Toxin MT2730.